The following is a 66-amino-acid chain: Large ribosomal subunit protein bL33B (66 aa).

The protein belongs to the bacterial ribosomal protein bL33 family.

This chain is Large ribosomal subunit protein bL33B, found in Synechococcus sp. (strain CC9605).